A 156-amino-acid polypeptide reads, in one-letter code: MKICLLCVGRLSIGYLREGAADFEARLQRYLPVRIVELKEEKSGKNDAEYIRRQEGRRILEKIPAGSFVIALDERGRSVSSEKLAALLERHMMESTPELTLIIGGAYGLCDEVKQRADMLMSLSEMTLTHQMARLVLLEQLYRGFTIVRNEPYHNR.

S-adenosyl-L-methionine is bound by residues Leu72, Gly104, and 123–128; that span reads LSEMTL.

Belongs to the RNA methyltransferase RlmH family. As to quaternary structure, homodimer.

It is found in the cytoplasm. The catalysed reaction is pseudouridine(1915) in 23S rRNA + S-adenosyl-L-methionine = N(3)-methylpseudouridine(1915) in 23S rRNA + S-adenosyl-L-homocysteine + H(+). In terms of biological role, specifically methylates the pseudouridine at position 1915 (m3Psi1915) in 23S rRNA. In Syntrophotalea carbinolica (strain DSM 2380 / NBRC 103641 / GraBd1) (Pelobacter carbinolicus), this protein is Ribosomal RNA large subunit methyltransferase H.